The following is a 550-amino-acid chain: Arginine--tRNA ligase (550 aa).

A 'HIGH' region motif is present at residues 122–132; that stretch reads GNPTGPLHLAH.

The protein belongs to the class-I aminoacyl-tRNA synthetase family. Monomer.

It is found in the cytoplasm. The enzyme catalyses tRNA(Arg) + L-arginine + ATP = L-arginyl-tRNA(Arg) + AMP + diphosphate. The protein is Arginine--tRNA ligase of Tropheryma whipplei (strain TW08/27) (Whipple's bacillus).